A 102-amino-acid chain; its full sequence is Acid shock protein (102 aa).

The signal sequence occupies residues 1–21 (MKKVLGLVVAAAMGLSSAAFA). Over residues 22–41 (AETATTPAPTATTTKAAPAK) the composition is skewed to low complexity. The propeptide occupies 22–58 (AETATTPAPTATTTKAAPAKTTHHKKQHKAAPAQKAQ). Positions 22 to 102 (AETATTPAPT…PAKPAAQPAA (81 aa)) are disordered. Residues 80-90 (AAKKHAGKHSH) are compositionally biased toward basic residues. Residues 91 to 102 (QQPAKPAAQPAA) are compositionally biased toward low complexity.

It belongs to the Asr family. In terms of processing, proteolytic processing gives rise to the active protein.

Its subcellular location is the periplasm. Functionally, required for growth and/or survival at acidic conditions. The chain is Acid shock protein from Escherichia coli (strain SE11).